A 449-amino-acid polypeptide reads, in one-letter code: Zinc finger and BTB domain-containing protein 14 (449 aa).

Positions Cys36 to Lys102 constitute a BTB domain. Residue Lys46 forms a Glycyl lysine isopeptide (Lys-Gly) (interchain with G-Cter in SUMO2) linkage. Residues His50–Lys66 carry the Nuclear localization signal motif. Residues Ala156–Thr194 form a disordered region. Positions Asp157 to Val178 are enriched in acidic residues. Residues Lys203 and Lys249 each participate in a glycyl lysine isopeptide (Lys-Gly) (interchain with G-Cter in SUMO2) cross-link. 5 consecutive C2H2-type zinc fingers follow at residues Ile277–Pro304, Phe305–Pro332, Tyr333–Pro360, Phe361–Pro388, and Phe389–Gln417. Positions Lys405–Gln417 are enriched in basic and acidic residues. The disordered stretch occupies residues Lys405–Gln424.

Belongs to the krueppel C2H2-type zinc-finger protein family. As to quaternary structure, interacts with ZBTB21. As to expression, ubiquitous.

The protein localises to the nucleus. In terms of biological role, transcriptional activator of the dopamine transporter (DAT), binding it's promoter at the consensus sequence 5'-CCTGCACAGTTCACGGA-3'. Binds to 5'-d(GCC)(n)-3' trinucleotide repeats in promoter regions and acts as a repressor of the FMR1 gene. Transcriptional repressor of MYC and thymidine kinase promoters. The protein is Zinc finger and BTB domain-containing protein 14 (Zbtb14) of Mus musculus (Mouse).